The chain runs to 362 residues: O-methyltransferase 13 (362 aa).

The S-adenosyl-L-homocysteine site is built by S181, G205, D228, D248, and K262. S-adenosyl-L-methionine is bound at residue D228. The Proton acceptor role is filled by H266.

The protein belongs to the class I-like SAM-binding methyltransferase superfamily. Cation-independent O-methyltransferase family. In terms of assembly, homodimer. Mainly expressed in vascular and cortical tissues.

The enzyme catalyses dopamine + S-adenosyl-L-methionine = 3-methoxytyramine + S-adenosyl-L-homocysteine + H(+). It functions in the pathway aromatic compound metabolism. It participates in alkaloid biosynthesis. Functionally, O-methyltransferase participating in the biosynthesis of natural products derived from phenylethylamine, including mescaline, a natural hallucinogen potentially used in psychotherapeutic treatments. Catalyzes the O-methylation of dopamine and 4,5-dihydroxy-3-methoxyphenethylamine. In Lophophora williamsii (Peyote), this protein is O-methyltransferase 13.